The sequence spans 209 residues: Uracil phosphoribosyltransferase (209 aa).

5-phospho-alpha-D-ribose 1-diphosphate contacts are provided by residues arginine 79, arginine 104, and 131–139; that span reads DPMLATANS. Residues isoleucine 194 and 199 to 201 each bind uracil; that span reads GDA. Aspartate 200 contributes to the 5-phospho-alpha-D-ribose 1-diphosphate binding site.

It belongs to the UPRTase family. Requires Mg(2+) as cofactor.

The enzyme catalyses UMP + diphosphate = 5-phospho-alpha-D-ribose 1-diphosphate + uracil. It functions in the pathway pyrimidine metabolism; UMP biosynthesis via salvage pathway; UMP from uracil: step 1/1. With respect to regulation, allosterically activated by GTP. Its function is as follows. Catalyzes the conversion of uracil and 5-phospho-alpha-D-ribose 1-diphosphate (PRPP) to UMP and diphosphate. The protein is Uracil phosphoribosyltransferase of Mesorhizobium japonicum (strain LMG 29417 / CECT 9101 / MAFF 303099) (Mesorhizobium loti (strain MAFF 303099)).